The chain runs to 126 residues: Aspartate 1-decarboxylase (126 aa).

Ser-25 serves as the catalytic Schiff-base intermediate with substrate; via pyruvic acid. Residue Ser-25 is modified to Pyruvic acid (Ser). Thr-57 contributes to the substrate binding site. Catalysis depends on Tyr-58, which acts as the Proton donor. 73–75 is a binding site for substrate; that stretch reads GAA.

This sequence belongs to the PanD family. In terms of assembly, heterooctamer of four alpha and four beta subunits. Pyruvate is required as a cofactor. Post-translationally, is synthesized initially as an inactive proenzyme, which is activated by self-cleavage at a specific serine bond to produce a beta-subunit with a hydroxyl group at its C-terminus and an alpha-subunit with a pyruvoyl group at its N-terminus.

It localises to the cytoplasm. It catalyses the reaction L-aspartate + H(+) = beta-alanine + CO2. It participates in cofactor biosynthesis; (R)-pantothenate biosynthesis; beta-alanine from L-aspartate: step 1/1. In terms of biological role, catalyzes the pyruvoyl-dependent decarboxylation of aspartate to produce beta-alanine. The sequence is that of Aspartate 1-decarboxylase from Salmonella dublin (strain CT_02021853).